The chain runs to 119 residues: Ribonuclease P protein component (119 aa).

Belongs to the RnpA family. As to quaternary structure, consists of a catalytic RNA component (M1 or rnpB) and a protein subunit.

The catalysed reaction is Endonucleolytic cleavage of RNA, removing 5'-extranucleotides from tRNA precursor.. In terms of biological role, RNaseP catalyzes the removal of the 5'-leader sequence from pre-tRNA to produce the mature 5'-terminus. It can also cleave other RNA substrates such as 4.5S RNA. The protein component plays an auxiliary but essential role in vivo by binding to the 5'-leader sequence and broadening the substrate specificity of the ribozyme. The sequence is that of Ribonuclease P protein component from Histophilus somni (strain 129Pt) (Haemophilus somnus).